A 413-amino-acid polypeptide reads, in one-letter code: Serine hydroxymethyltransferase (413 aa).

(6S)-5,6,7,8-tetrahydrofolate contacts are provided by residues Leu-119 and Gly-123–Leu-125. At Lys-228 the chain carries N6-(pyridoxal phosphate)lysine. A (6S)-5,6,7,8-tetrahydrofolate-binding site is contributed by Glu-243.

This sequence belongs to the SHMT family. In terms of assembly, homodimer. Pyridoxal 5'-phosphate is required as a cofactor.

The protein localises to the cytoplasm. It catalyses the reaction (6R)-5,10-methylene-5,6,7,8-tetrahydrofolate + glycine + H2O = (6S)-5,6,7,8-tetrahydrofolate + L-serine. It participates in one-carbon metabolism; tetrahydrofolate interconversion. The protein operates within amino-acid biosynthesis; glycine biosynthesis; glycine from L-serine: step 1/1. Catalyzes the reversible interconversion of serine and glycine with tetrahydrofolate (THF) serving as the one-carbon carrier. This reaction serves as the major source of one-carbon groups required for the biosynthesis of purines, thymidylate, methionine, and other important biomolecules. Also exhibits THF-independent aldolase activity toward beta-hydroxyamino acids, producing glycine and aldehydes, via a retro-aldol mechanism. The sequence is that of Serine hydroxymethyltransferase from Desulforamulus reducens (strain ATCC BAA-1160 / DSM 100696 / MI-1) (Desulfotomaculum reducens).